The sequence spans 610 residues: Phosphoenolpyruvate carboxykinase [GTP] (610 aa).

Residues Arg-82 and 221–223 (YGG) contribute to the substrate site. Lys-230 and His-250 together coordinate Mn(2+). Ser-272 contributes to the substrate binding site. 273 to 278 (ACGKTN) serves as a coordination point for GTP. Residue Cys-274 is part of the active site. Asp-297 provides a ligand contact to Mn(2+). 387-389 (NSR) lines the substrate pocket. Residues Arg-389, Arg-420, and 515–518 (FGDN) each bind GTP.

It belongs to the phosphoenolpyruvate carboxykinase [GTP] family. In terms of assembly, monomer. Requires Mn(2+) as cofactor.

It is found in the cytoplasm. The catalysed reaction is oxaloacetate + GTP = phosphoenolpyruvate + GDP + CO2. It participates in carbohydrate biosynthesis; gluconeogenesis. Functionally, involved in the gluconeogenesis. Catalyzes the conversion of oxaloacetate (OAA) to phosphoenolpyruvate (PEP), the rate-limiting step in the metabolic pathway that produces glucose from lactate and other precursors derived from the citric acid cycle. The protein is Phosphoenolpyruvate carboxykinase [GTP] of Corynebacterium glutamicum (strain ATCC 13032 / DSM 20300 / JCM 1318 / BCRC 11384 / CCUG 27702 / LMG 3730 / NBRC 12168 / NCIMB 10025 / NRRL B-2784 / 534).